Reading from the N-terminus, the 668-residue chain is Kinesin-like protein KIF2B (668 aa).

Threonine 125 is subject to Phosphothreonine; by PLK1. The stretch at 149–177 (CLREIEKLQKQREKRRRLQLEIRARRALD) forms a coiled coil. A Phosphoserine; by PLK1 modification is found at serine 204. The 331-residue stretch at 213-543 (RICVCVRKRP…LRYANRVKEL (331 aa)) folds into the Kinesin motor domain. 303 to 310 (GQTGSGKT) contributes to the ATP binding site. The span at 585-604 (PTVEKEEEKESDELTSKKEP) shows a compositional bias: basic and acidic residues. The disordered stretch occupies residues 585–605 (PTVEKEEEKESDELTSKKEPA). The stretch at 646–667 (VLTDIQKKLQSLREDLQKKSQV) forms a coiled coil.

Belongs to the TRAFAC class myosin-kinesin ATPase superfamily. Kinesin family. MCAK/KIF2 subfamily. Phosphorylation at Thr-125 by PLK1 is required for activity in the correction of kinetochore-microtubules attachment errors, while phosphorylation at Ser-204 also by PLK1 is required for the kinetochore localization and activity in prometaphase.

It localises to the cytoplasm. The protein localises to the cytoskeleton. It is found in the microtubule organizing center. The protein resides in the centrosome. Its subcellular location is the spindle. It localises to the chromosome. The protein localises to the centromere. It is found in the kinetochore. Functionally, plus end-directed microtubule-dependent motor required for spindle assembly and chromosome movement during mitosis. Has microtubule depolymerization activity. Plays a role in chromosome congression. The chain is Kinesin-like protein KIF2B (Kif2b) from Mus musculus (Mouse).